Reading from the N-terminus, the 349-residue chain is Phosphoribosylformylglycinamidine cyclo-ligase (349 aa).

It belongs to the AIR synthase family.

Its subcellular location is the cytoplasm. The enzyme catalyses 2-formamido-N(1)-(5-O-phospho-beta-D-ribosyl)acetamidine + ATP = 5-amino-1-(5-phospho-beta-D-ribosyl)imidazole + ADP + phosphate + H(+). It participates in purine metabolism; IMP biosynthesis via de novo pathway; 5-amino-1-(5-phospho-D-ribosyl)imidazole from N(2)-formyl-N(1)-(5-phospho-D-ribosyl)glycinamide: step 2/2. In Methanococcus maripaludis (strain C6 / ATCC BAA-1332), this protein is Phosphoribosylformylglycinamidine cyclo-ligase.